The primary structure comprises 183 residues: Gamma-crystallin N (183 aa).

Beta/gamma crystallin 'Greek key' domains follow at residues 6-46 (GKIT…RVES), 47-89 (GAWV…RPVG), 95-136 (FRID…KVYG), and 138-180 (GAWV…RRVL).

The protein belongs to the beta/gamma-crystallin family. In terms of assembly, monomer. As to expression, primordially eye-specific. Present in lens nucleus. In the retina, expression in observed in the outer plexiform layer (containing photoreceptors axons and synapses) and photoreceptor outer segments (at protein level). Also detected in the auditory hindbrain where it is highly expressed in the medial nucleus of the trapezoid body, but also present in other nuclei of the superior olivary complex.

In terms of biological role, crystallins are the dominant structural components of the vertebrate eye lens. Also plays an important role for integrity and function of auditory nuclei. The polypeptide is Gamma-crystallin N (Mus musculus (Mouse)).